We begin with the raw amino-acid sequence, 546 residues long: Cholesterol oxidase (546 aa).

The segment at residues 1–42 (MTAQQHLSRRRMLGMAAFGAAALAGGTTIAAPRAAAAAKSAA) is a signal peptide (tat-type signal). 8 residues coordinate FAD: tyrosine 57, glycine 58, glutamate 77, glycine 152, asparagine 156, glycine 157, methionine 159, and valine 287. Residues glutamate 398 and histidine 484 each act as proton acceptor in the active site. FAD is bound by residues glycine 512 and phenylalanine 524.

The protein belongs to the GMC oxidoreductase family. In terms of assembly, monomer. FAD is required as a cofactor. Predicted to be exported by the Tat system. The position of the signal peptide cleavage has been experimentally proven.

It localises to the secreted. It catalyses the reaction cholesterol + O2 = cholest-5-en-3-one + H2O2. It carries out the reaction cholest-5-en-3-one = cholest-4-en-3-one. It participates in steroid metabolism; cholesterol degradation. In terms of biological role, bifunctional enzyme that catalyzes the oxidation and isomerization of cholesterol to cholestenone (cholest-4-en-3-one), an initial step in the cholesterol degradation process. The cholesterol degradation pathway allows the bacterium to utilize cholesterol as its sole source of carbon and energy. This is Cholesterol oxidase from Streptomyces sp. (strain SA-COO).